A 166-amino-acid chain; its full sequence is uncharacterized protein (166 aa).

N-acetylalanine is present on A2.

As to quaternary structure, homodimer.

This is an uncharacterized protein from Arabidopsis thaliana (Mouse-ear cress).